The sequence spans 2443 residues: Non-reducing polyketide synthase olcA (2443 aa).

In terms of domain architecture, Ketosynthase family 3 (KS3) spans Ile-5–Ser-442. Active-site for beta-ketoacyl synthase activity residues include Cys-178, His-317, and His-362. Positions Gly-550–Leu-885 are malonyl-CoA:ACP transacylase (MAT) domain. Catalysis depends on Ser-645, which acts as the For acyl/malonyl transferase activity. Residues Asn-940–Ala-1070 form an N-terminal hotdog fold region. A PKS/mFAS DH domain is found at Asn-940 to Asp-1231. The tract at residues Ala-989–Arg-1497 is product template (PT) domain. The C-terminal hotdog fold stretch occupies residues Met-1085 to Asp-1231. The methyltransferase (CMeT) domain stretch occupies residues Asn-1771–Pro-2159. The Carrier domain maps to Glu-2359–Leu-2434. Ser-2394 is modified (O-(pantetheine 4'-phosphoryl)serine).

The enzyme catalyses nicotinyl-CoA + 2 malonyl-CoA + H(+) = 4-hydroxy-6-(pyridin-3-yl)-2H-pyran-2-one + 2 CO2 + 3 CoA. It participates in secondary metabolite biosynthesis; terpenoid biosynthesis. Its function is as follows. Non-reducing polyketide synthase; part of the gene cluster that mediates the biosynthesis of 15-deoxyoxalicine B. The first step of the pathway is the synthesis of nicotinyl-CoA from nicotinic acid by the nicotinic acid-CoA ligase olcI. Nicotinyl-CoA is then a substrate of polyketide synthase olcA to produce 4-hydroxy-6-(3-pyridinyl)-2H-pyran-2-one (HPPO) which is further prenylated by the polyprenyl transferase olcH to yield geranylgeranyl-HPPO. Geranylgeranyl pyrophosphate is provided by the cluster-specific geranylgeranyl pyrophosphate synthase olcC. The FAD-dependent monooxygenase olcE catalyzes the epoxidation of geranylgeranyl-HPPO and the terpene cyclase olcD catalyzes the cyclization of the terpenoid component, resulting in the formation of the tricyclic terpene moiety seen in predecaturin E. The cytochrome P450 monooxygenase then catalyzes the allylic oxidation of predecaturin E, which is followed by spirocylization with concomitant loss of one molecule of water to form decaturin E. Decaturin E is the substrate of the cytochrome P450 monooxygenase olcJ which hydroxylates it at the C-29 position to form decaturin F. The short-chain dehydrogenase/reductase olcF may catalyze the oxidation of decaturin F to generate the 29-hydroxyl-27-one intermediate, and subsequent hemiacetal formation probably leads to the formation of decaturin C. The dioxygenase olcK may be a peroxisomal enzyme that catalyzes the hydroxylation of decaturin C into decaturin A once decaturin C is shuttled into the peroxisome by the MFS transporter olcL. Finally the cytochrome P450 monooxygenase olcB catalyzes the oxidative rearrangement to yield 15-deoxyoxalicine B. In the absence of olcJ, decaturin E may be shunted to a pathway in which it is oxidized to a ketone, possibly by olcF, to form decaturin D, which undergoes further allylic oxidation to yield decaturin G. Moreover, in the absence of oclK or oclL, oclB can convert decaturin C into 15-deoxyoxalicine A. The polypeptide is Non-reducing polyketide synthase olcA (Penicillium canescens).